The primary structure comprises 386 residues: Phosphate acyltransferase (386 aa).

The interval Pro-359–Thr-386 is disordered. The span at Gln-377 to Thr-386 shows a compositional bias: polar residues.

This sequence belongs to the PlsX family. As to quaternary structure, homodimer. Probably interacts with PlsY.

The protein localises to the cytoplasm. The enzyme catalyses a fatty acyl-[ACP] + phosphate = an acyl phosphate + holo-[ACP]. It participates in lipid metabolism; phospholipid metabolism. Catalyzes the reversible formation of acyl-phosphate (acyl-PO(4)) from acyl-[acyl-carrier-protein] (acyl-ACP). This enzyme utilizes acyl-ACP as fatty acyl donor, but not acyl-CoA. This chain is Phosphate acyltransferase, found in Beijerinckia indica subsp. indica (strain ATCC 9039 / DSM 1715 / NCIMB 8712).